The chain runs to 295 residues: Pyridoxal 5'-phosphate synthase subunit PdxS (295 aa).

D23 lines the D-ribose 5-phosphate pocket. K80 serves as the catalytic Schiff-base intermediate with D-ribose 5-phosphate. D-ribose 5-phosphate is bound at residue G152. R164 contributes to the D-glyceraldehyde 3-phosphate binding site. D-ribose 5-phosphate contacts are provided by residues G213 and 234 to 235 (GS).

Belongs to the PdxS/SNZ family. As to quaternary structure, in the presence of PdxT, forms a dodecamer of heterodimers.

The enzyme catalyses aldehydo-D-ribose 5-phosphate + D-glyceraldehyde 3-phosphate + L-glutamine = pyridoxal 5'-phosphate + L-glutamate + phosphate + 3 H2O + H(+). Its pathway is cofactor biosynthesis; pyridoxal 5'-phosphate biosynthesis. Functionally, catalyzes the formation of pyridoxal 5'-phosphate from ribose 5-phosphate (RBP), glyceraldehyde 3-phosphate (G3P) and ammonia. The ammonia is provided by the PdxT subunit. Can also use ribulose 5-phosphate and dihydroxyacetone phosphate as substrates, resulting from enzyme-catalyzed isomerization of RBP and G3P, respectively. This is Pyridoxal 5'-phosphate synthase subunit PdxS from Methanopyrus kandleri (strain AV19 / DSM 6324 / JCM 9639 / NBRC 100938).